The sequence spans 31 residues: Cytochrome b6-f complex subunit 6 (31 aa).

The helical transmembrane segment at leucine 4–glycine 24 threads the bilayer.

It belongs to the PetL family. As to quaternary structure, the 4 large subunits of the cytochrome b6-f complex are cytochrome b6, subunit IV (17 kDa polypeptide, PetD), cytochrome f and the Rieske protein, while the 4 small subunits are PetG, PetL, PetM and PetN. The complex functions as a dimer.

The protein localises to the plastid. It localises to the chloroplast thylakoid membrane. Its function is as follows. Component of the cytochrome b6-f complex, which mediates electron transfer between photosystem II (PSII) and photosystem I (PSI), cyclic electron flow around PSI, and state transitions. PetL is important for photoautotrophic growth as well as for electron transfer efficiency and stability of the cytochrome b6-f complex. In Agrostis stolonifera (Creeping bentgrass), this protein is Cytochrome b6-f complex subunit 6.